Reading from the N-terminus, the 114-residue chain is Pro-FMRFamide-related neuropeptide FF (114 aa).

Positions 1–21 (MDSKWAALLLLLLLLLNWGHT) are cleaved as a signal peptide. Positions 22-69 (EEAGSWGEDQVFAGEDKGPHPPQYAHIPDRIQTPGSLFRVLLQAMDTP) are excised as a propeptide. Phe-82 carries the post-translational modification Phenylalanine amide. Residues 85 to 100 (SAWGSWSKEQLNPQAR) constitute a propeptide that is removed on maturation. Phe-111 bears the Phenylalanine amide mark.

This sequence belongs to the FARP (FMRFamide related peptide) family.

Its subcellular location is the secreted. In terms of biological role, morphine modulating peptides. Have wide-ranging physiologic effects, including the modulation of morphine-induced analgesia, elevation of arterial blood pressure, and increased somatostatin secretion from the pancreas. Neuropeptide FF potentiates and sensitizes ASIC1 and ASIC3 channels. The polypeptide is Pro-FMRFamide-related neuropeptide FF (Npff) (Mus musculus (Mouse)).